The chain runs to 133 residues: MSMGSFGFALAVMVLAVLVASAAGAPNTNFVSSACNTKKIPSGNPFFNNLGALLVNLEKNTAFSGYDYKASRAGSGGAPTAYGRGVCKQSISQSDCTACLTNLGGRIWGICKNAIGARVQLTDCFIRYEQYSI.

Positions 1-24 are cleaved as a signal peptide; sequence MSMGSFGFALAVMVLAVLVASAAG. Residues 28–133 form the Gnk2-homologous domain; sequence TNFVSSACNT…CFIRYEQYSI (106 aa). Disulfide bonds link C35–C111, C87–C96, and C99–C124. An alpha-D-mannopyranose-binding site is contributed by N36. Residues R118 and E129 each contribute to the alpha-D-mannopyranose site.

In terms of biological role, exerts antifungal activity through its carbohydrate-binding specificity. In Picea sitchensis (Sitka spruce), this protein is Antifungal protein ginkbilobin-like protein 1.